The following is a 452-amino-acid chain: NADH-cytochrome b5 reductase-like protein alnC (452 aa).

One can recognise a Cytochrome b5 heme-binding domain in the interval 4–80 (PASITLAEVA…LKTLLVGSLQ (77 aa)). 33-38 (AEYRED) contributes to the FMN binding site. Positions 39 and 63 each coordinate heme. Residues 80–83 (QSKT) and 116–125 (NDTSKYGQLP) contribute to the FMN site. 2 helical membrane-spanning segments follow: residues 120 to 140 (KYGQLPSLVLAGGLALLFFTL) and 166 to 186 (VGFLGGFLTATTLNTAAATFV). Positions 225 to 324 (NTQQFLTLVD…RGPFGRYSPS (100 aa)) constitute an FAD-binding FR-type domain. Residue 302–305 (YLLN) coordinates FAD. NADP(+) is bound by residues 389-390 (GQ) and 395-399 (WKGLR).

This sequence belongs to the flavoprotein pyridine nucleotide cytochrome reductase family. FAD is required as a cofactor. Requires FMN as cofactor.

It localises to the membrane. The protein operates within polyketide biosynthesis. Functionally, NADH-cytochrome b5 reductase-like protein; part of the gene cluster that mediates the biosynthesis of asperlin, a polyketide showing anti-inflammatory, antitumor and antibiotic activities. The first step of the asperlin biosynthesis is the production of the intermediate 2,4,6-octatrienoic acid by the highly redusing polyketide synthase alnA with cleavage of the PKS product by the esterase alnB. 2,4,6-octatrienoic acid is further converted to asperlin via several steps involving the remaining enzymes from the cluster. The protein is NADH-cytochrome b5 reductase-like protein alnC of Emericella nidulans (strain FGSC A4 / ATCC 38163 / CBS 112.46 / NRRL 194 / M139) (Aspergillus nidulans).